We begin with the raw amino-acid sequence, 195 residues long: Peroxiredoxin bcp1 (195 aa).

A Thioredoxin domain is found at 46 to 168 (IQVGDVIPDI…SHWIFEKGTG (123 aa)). C89 acts as the Cysteine sulfenic acid (-SOH) intermediate in catalysis. Cysteines 89 and 94 form a disulfide.

It belongs to the peroxiredoxin family. BCP/PrxQ subfamily. As to quaternary structure, monomer. The active site is a conserved redox-active cysteine residue, the peroxidatic cysteine (C(P)), which makes the nucleophilic attack on the peroxide substrate. The peroxide oxidizes the C(P)-SH to cysteine sulfenic acid (C(P)-SOH), which then reacts with another cysteine residue, the resolving cysteine (C(R)), to form a disulfide bridge. The disulfide is subsequently reduced by an appropriate electron donor to complete the catalytic cycle. In this atypical 2-Cys peroxiredoxin, C(R) is present in the same subunit to form an intramolecular disulfide. The disulfide is subsequently reduced by thioredoxin.

The protein localises to the cytoplasm. It localises to the nucleus. The catalysed reaction is a hydroperoxide + [thioredoxin]-dithiol = an alcohol + [thioredoxin]-disulfide + H2O. Its function is as follows. Thiol-specific peroxidase that catalyzes the reduction of hydrogen peroxide and organic hydroperoxides to water and alcohols, respectively. Plays a role in cell protection against oxidative stress by detoxifying peroxides and as sensor of hydrogen peroxide-mediated signaling events. Acts as a scavenger of H(2)O(2). In Schizosaccharomyces pombe (strain 972 / ATCC 24843) (Fission yeast), this protein is Peroxiredoxin bcp1 (bcp1).